The following is a 122-amino-acid chain: Histone H2B (122 aa).

Residues 1-31 form a disordered region; sequence MPPKPSGKGQKKAGKAKGAPSTNKKRKRKRK. P2 is subject to N,N-dimethylproline. Q10 participates in a covalent cross-link: Isoglutamyl lysine isopeptide (Gln-Lys) (interchain with K-5 in histone H4). The O-linked (GlcNAc) serine glycan is linked to S109. K117 is covalently cross-linked (Glycyl lysine isopeptide (Lys-Gly) (interchain with G-Cter in ubiquitin)).

The protein belongs to the histone H2B family. The nucleosome is a histone octamer containing two molecules each of H2A, H2B, H3 and H4 assembled in one H3-H4 heterotetramer and two H2A-H2B heterodimers. The octamer wraps approximately 147 bp of DNA. Monoubiquitination of Lys-117 gives a specific tag for epigenetic transcriptional activation and is also prerequisite for histone H3 'Lys-4' and 'Lys-79' methylation. Post-translationally, glcNAcylation at Ser-109 promotes monoubiquitination of Lys-117. It fluctuates in response to extracellular glucose, and associates with transcribed genes.

The protein localises to the nucleus. It localises to the chromosome. In terms of biological role, core component of nucleosome. Nucleosomes wrap and compact DNA into chromatin, limiting DNA accessibility to the cellular machineries which require DNA as a template. Histones thereby play a central role in transcription regulation, DNA repair, DNA replication and chromosomal stability. DNA accessibility is regulated via a complex set of post-translational modifications of histones, also called histone code, and nucleosome remodeling. In Patiria pectinifera (Starfish), this protein is Histone H2B.